The primary structure comprises 201 residues: Adenylyl-sulfate kinase (201 aa).

Residues 1 to 23 are disordered; it reads MALHDENVVWHSHPVTPQQREQH. ATP is bound at residue 35 to 42; sequence GLSGSGKS. Ser-109 acts as the Phosphoserine intermediate in catalysis.

It belongs to the APS kinase family.

It carries out the reaction adenosine 5'-phosphosulfate + ATP = 3'-phosphoadenylyl sulfate + ADP + H(+). The protein operates within sulfur metabolism; hydrogen sulfide biosynthesis; sulfite from sulfate: step 2/3. In terms of biological role, catalyzes the synthesis of activated sulfate. The protein is Adenylyl-sulfate kinase of Escherichia coli O127:H6 (strain E2348/69 / EPEC).